The following is a 793-amino-acid chain: Kinesin-like protein KIF3C (793 aa).

One can recognise a Kinesin motor domain in the interval 10-365; sequence ALKVVARCRP…LRFANRAKNI (356 aa). 97–104 is a binding site for ATP; that stretch reads GQTGTGKT. 3 disordered regions span residues 251–288, 395–423, and 756–793; these read ERQN…ERPK, EKRG…GYPE, and KVRK…ADHE. Gly residues predominate over residues 270–284; sequence GGSGGGGGSGGGAGG. Residues 376 to 630 are a coiled coil; sequence KDTLLREFQE…QNEQTRELKL (255 aa). Over residues 399 to 413 the composition is skewed to basic residues; it reads MLGKRPRRKSSRGKK. The globular stretch occupies residues 631–793; it reads KYLIIENFIP…LRPATVADHE (163 aa).

This sequence belongs to the TRAFAC class myosin-kinesin ATPase superfamily. Kinesin family. Kinesin II subfamily. As to quaternary structure, heterodimer of KIF3A and KIF3C.

The protein localises to the cytoplasm. The protein resides in the cytoskeleton. Microtubule-based anterograde translocator for membranous organelles. The chain is Kinesin-like protein KIF3C (KIF3C) from Pongo abelii (Sumatran orangutan).